The sequence spans 175 residues: R-phycoerythrin subunit beta (175 aa).

Cys82 contributes to the (2R,3E)-phycoerythrobilin binding site.

The protein belongs to the phycobiliprotein family. Homodimer. In terms of processing, contains one covalently linked phycoerythrobilin chromophore.

Functionally, green-light absorbing phycoerythrin of unknown function. In Prochlorococcus marinus subsp. pastoris (strain CCMP1986 / NIES-2087 / MED4), this protein is R-phycoerythrin subunit beta (cpeB).